The primary structure comprises 595 residues: NADPH-dependent diflavin oxidoreductase 1 (595 aa).

Positions 6–150 (VLVLYGSQTG…VIDPWLLSFW (145 aa)) constitute a Flavodoxin-like domain. FMN is bound by residues 12–17 (SQTGTA), 59–62 (ATTG), 97–106 (LGDSSYPKFN), and D132. One can recognise an FAD-binding FR-type domain in the interval 204–444 (LRPFPAPLVF…WVKKGSLKFP (241 aa)). Residues R348, 380–383 (RSFS), and 414–417 (GLCS) contribute to the FAD site. NADP(+) is bound by residues T458, 513 to 514 (SR), and 519 to 523 (KVYVQ). W594 lines the FAD pocket.

It belongs to the NADPH-dependent diflavin oxidoreductase NDOR1 family. This sequence in the N-terminal section; belongs to the flavodoxin family. In the C-terminal section; belongs to the flavoprotein pyridine nucleotide cytochrome reductase family. Interacts with ciapin1; as part of the cytosolic iron-sulfur (Fe-S) protein assembly (CIA) machinery. It depends on FAD as a cofactor. FMN is required as a cofactor.

It is found in the cytoplasm. The protein resides in the perinuclear region. It catalyses the reaction 2 oxidized [2Fe-2S]-[protein] + NADPH = 2 reduced [2Fe-2S]-[protein] + NADP(+) + H(+). NADPH-dependent reductase which is a central component of the cytosolic iron-sulfur (Fe-S) protein assembly (CIA) machinery. Transfers electrons from NADPH via its FAD and FMN prosthetic groups to the [2Fe-2S] cluster of ciapin1, another key component of the CIA machinery. In turn, this reduced cluster provides electrons for assembly of cytosolic iron-sulfur cluster proteins. It can also reduce the [2Fe-2S] cluster of cisd1 and activate this protein implicated in Fe/S cluster repair. In Danio rerio (Zebrafish), this protein is NADPH-dependent diflavin oxidoreductase 1.